Reading from the N-terminus, the 338-residue chain is (-)-alpha-amorphene synthase ((2E,6E)-farnesyl diphosphate cyclizing) (338 aa).

Mg(2+) contacts are provided by Asp105 and Glu109. A DDXXE motif motif is present at residues 105–109; the sequence is DDRAE. Substrate is bound at residue Arg196. Ser246 contacts Mg(2+). Lys249 contributes to the substrate binding site. Glu250 provides a ligand contact to Mg(2+). 327-328 provides a ligand contact to substrate; the sequence is RY.

Belongs to the terpene synthase family. It depends on Mg(2+) as a cofactor.

It catalyses the reaction (2E,6E)-farnesyl diphosphate = (-)-alpha-amorphene + diphosphate. It participates in secondary metabolite biosynthesis; terpenoid biosynthesis. Its function is as follows. Catalyzes the conversion of (2E,6E)-farnesyl diphosphate (FPP) to yield the bicyclic sesquiterpene (1R,6S,7S)-(-)-alpha-amorphene via a probable 1,6-cyclization, which could involve the abstraction of the pyrophosphate from FPP to yield a (R)-bisabolyl cation. The only accepted substrate is (2E,6E)-farnesyl diphosphate (FPP). The protein is (-)-alpha-amorphene synthase ((2E,6E)-farnesyl diphosphate cyclizing) of Streptomyces viridochromogenes (strain DSM 40736 / JCM 4977 / BCRC 1201 / Tue 494).